The chain runs to 282 residues: L-allo-isoleucyltransferase (282 aa).

Catalysis depends on Cys105, which acts as the Acyl-thioester intermediate. One can recognise an AB hydrolase-1 domain in the interval 169–261 (HTQSTYTPSD…DGQHHDFVDG (93 aa)).

The protein belongs to the AB hydrolase superfamily.

It carries out the reaction holo-[CmaD peptidyl-carrier protein] + L-alloisoleucyl-[CmaA peptidyl-carrier protein] = L-alloisoleucyl-[CmaD peptidyl-carrier protein] + holo-[CmaA peptidyl-carrier protein]. Its function is as follows. Involved in the biosynthesis of the phytotoxin coronatine (COR). Catalyzes the transfer of the aminoacyl group covalently attached to the pantetheinyl arm of CmaA to the holo-pantetheinyl arm of CmaD. During the shuttling process, CmaE generates a covalent-aminoacyl-S-Cys enzyme intermediate by the action of its donor substrate L-aminoacyl-S-CmaA and delivers it to the sulfhydryl group attached to the phosphopantetheinyl arm on CmaD. The polypeptide is L-allo-isoleucyltransferase (Pseudomonas savastanoi pv. glycinea (Pseudomonas syringae pv. glycinea)).